We begin with the raw amino-acid sequence, 410 residues long: Elongation factor Tu, chloroplastic (410 aa).

Residues 10 to 213 (KPHLNIGTIG…TVDEYIPTPK (204 aa)) form the tr-type G domain. Positions 19–26 (GHVDHGKT) are G1. 19–26 (GHVDHGKT) is a GTP binding site. Residue threonine 26 participates in Mg(2+) binding. Positions 60 to 64 (GITIN) are G2. Residues 81 to 84 (DCPG) form a G3 region. GTP-binding positions include 81 to 85 (DCPGH) and 136 to 139 (NKAD). The interval 136–139 (NKAD) is G4. A G5 region spans residues 174-176 (SAI).

It belongs to the TRAFAC class translation factor GTPase superfamily. Classic translation factor GTPase family. EF-Tu/EF-1A subfamily.

It is found in the plastid. The protein localises to the chloroplast. The enzyme catalyses GTP + H2O = GDP + phosphate + H(+). Its function is as follows. GTP hydrolase that promotes the GTP-dependent binding of aminoacyl-tRNA to the A-site of ribosomes during protein biosynthesis. The chain is Elongation factor Tu, chloroplastic (tufA) from Codium fragile (Dead man's fingers).